A 748-amino-acid polypeptide reads, in one-letter code: CCR4-NOT transcription complex subunit 10-A (748 aa).

Positions 1-17 are enriched in basic and acidic residues; it reads MAADKAGEQGAEKHEDS. Disordered stretches follow at residues 1-25, 184-205, 483-524, and 605-635; these read MAADKAGEQGAEKHEDSANCSGISD, SNNKNGKNNETNSNANNREPFA, KQEN…PPSS, and VSLGVSSNEQEQGSDKGENEPMESVGKQMPQ. The span at 185–200 shows a compositional bias: low complexity; sequence NNKNGKNNETNSNANN. Composition is skewed to polar residues over residues 487–509 and 605–615; these read GSKTSSQTGNTDSGGESSEVCSN and VSLGVSSNEQE.

Belongs to the CNOT10 family. Component of the CCR4-NOT complex. cnot10 and cnot11 form a subcomplex docked to the cnot1 scaffold.

Its subcellular location is the cytoplasm. It localises to the nucleus. Its function is as follows. Component of the CCR4-NOT complex which is one of the major cellular mRNA deadenylases and is linked to various cellular processes including bulk mRNA degradation, miRNA-mediated repression, translational repression during translational initiation and general transcription regulation. Additional complex functions may be a consequence of its influence on mRNA expression. Is not required for association of CNOT7 to the CCR4-NOT complex. The sequence is that of CCR4-NOT transcription complex subunit 10-A (cnot10-a) from Xenopus laevis (African clawed frog).